The following is a 234-amino-acid chain: Adenosine 5'-phosphosulfate reductase (234 aa).

Residues Cys-120, Cys-121, Cys-203, and Cys-206 each coordinate [4Fe-4S] cluster. The active-site Nucleophile; cysteine thiosulfonate intermediate is Cys-229.

The protein belongs to the PAPS reductase family. CysH subfamily. [4Fe-4S] cluster is required as a cofactor.

Its subcellular location is the cytoplasm. The catalysed reaction is [thioredoxin]-disulfide + sulfite + AMP + 2 H(+) = adenosine 5'-phosphosulfate + [thioredoxin]-dithiol. The protein operates within sulfur metabolism; hydrogen sulfide biosynthesis; sulfite from sulfate. Catalyzes the formation of sulfite from adenosine 5'-phosphosulfate (APS) using thioredoxin as an electron donor. The polypeptide is Adenosine 5'-phosphosulfate reductase (Bacillus cereus (strain AH187)).